Here is a 341-residue protein sequence, read N- to C-terminus: MRLNGEISSGEEEEEEKQTGTTTFSSQKVVVGYALTSKKKKSFLQPSFTGLARNRGINFVAIDLNKPLPEQGPFDIILHKLSGEVWREIIEDYREKHPEVTVLDPPDAIQHLHNRQSMLQDVLDLNLSDCHGKVGVPRQLVITKEKDPSSIPYEVTKAGMKLPLVAKPLVVDGTAKSHELFLAYDEFSLSAVEPPLVLQEFVNHGGLLFKIYIVGETIKVVRRFSLPNISKRELSKVAGVFRFPRVSCAAASADDADLDPNIAEHPPRPLLERLARELRHRLGLHLFNIDMIREYGTKDVFYVIDINYFPGYGKMPGYEHVFTDFLLSLVESKCSNKKLAA.

The interval 1 to 23 is disordered; it reads MRLNGEISSGEEEEEEKQTGTTT. Residues Lys-38 and Lys-80 each contribute to the 1D-myo-inositol 6-phosphate site. ATP contacts are provided by Arg-115 and Lys-167. Positions 125 to 335 constitute an ATP-grasp domain; it reads LNLSDCHGKV…LLSLVESKCS (211 aa). 1D-myo-inositol 6-phosphate contacts are provided by Gly-173 and His-178. The ATP site is built by His-178, Gln-199, and Val-202. Lys-210 and Tyr-212 together coordinate 1D-myo-inositol 6-phosphate. Ser-225 contributes to the ATP binding site. The catalytic specificity elements (CSE) stretch occupies residues 233 to 259; the sequence is ELSKVAGVFRFPRVSCAAASADDADLD. Asn-288 is a 1D-myo-inositol 6-phosphate binding site. Asp-290 contributes to the Mg(2+) binding site. Ile-304, Asp-305, and Asn-307 together coordinate ATP. Mg(2+) contacts are provided by Asp-305 and Asn-307. 1D-myo-inositol 6-phosphate-binding residues include Asn-307, Gly-311, and Lys-314.

The protein belongs to the ITPK1 family. As to quaternary structure, monomer. It depends on Mg(2+) as a cofactor. Expressed in seeds.

The enzyme catalyses 1D-myo-inositol 1,3,4-trisphosphate + ATP = 1D-myo-inositol 1,3,4,5-tetrakisphosphate + ADP + H(+). The catalysed reaction is 1D-myo-inositol 1,3,4-trisphosphate + ATP = 1D-myo-inositol 1,3,4,6-tetrakisphosphate + ADP + H(+). It carries out the reaction 1D-myo-inositol 3,4,5,6-tetrakisphosphate + ATP = 1D-myo-inositol 1,3,4,5,6-pentakisphosphate + ADP + H(+). It catalyses the reaction 1D-myo-inositol 3,4,6-trisphosphate + ATP = 1D-myo-inositol 1,3,4,6-tetrakisphosphate + ADP + H(+). Its function is as follows. Kinase that can phosphorylate various inositol polyphosphate such as Ins(3,4,5,6)P4, Ins(3,4,6)P3 and Ins(1,3,4)P3. May participate in an inositol lipid-independent pathway of InsP6 synthesis. The sequence is that of Inositol-tetrakisphosphate 1-kinase 4 from Glycine max (Soybean).